The chain runs to 690 residues: UvrABC system protein C (690 aa).

A disordered region spans residues 1-60 (MTTDSSDPAKPAGPGQPPGSGADTRPGGLATGQDVDPATIETDEDDEARLPDVPDEPTDA). Residues 41 to 58 (ETDEDDEARLPDVPDEPT) are compositionally biased toward acidic residues. One can recognise a GIY-YIG domain in the interval 82–160 (TSPGVYRMMN…IKQLRPRFNV (79 aa)). Residues 270-305 (RAVKEELAREMEKASGDLAFERAALYRDRLAALSAI) form the UVR domain.

The protein belongs to the UvrC family. In terms of assembly, interacts with UvrB in an incision complex.

The protein localises to the cytoplasm. Functionally, the UvrABC repair system catalyzes the recognition and processing of DNA lesions. UvrC both incises the 5' and 3' sides of the lesion. The N-terminal half is responsible for the 3' incision and the C-terminal half is responsible for the 5' incision. This chain is UvrABC system protein C, found in Nitrobacter hamburgensis (strain DSM 10229 / NCIMB 13809 / X14).